The sequence spans 196 residues: UMP-CMP kinase (196 aa).

Position 13–18 (13–18 (GAGKGT)) interacts with ATP. Phosphoserine is present on Ser33. An NMP region spans residues 33 to 63 (SAGELLRDERKNPDSQYGELIEKYIKDGKIV). Arg39 serves as a coordination point for a ribonucleoside 5'-phosphate. 2 positions are modified to N6-acetyllysine: Lys43 and Lys55. Residues 61-63 (KIV) and 93-96 (GFPR) each bind a ribonucleoside 5'-phosphate. Asn100 contributes to the CMP binding site. Lys106 bears the N6-succinyllysine mark. Residues 133 to 143 (ERGKSSGRSDD) are LID. Arg134 is an ATP binding site. Positions 140 and 151 each coordinate a ribonucleoside 5'-phosphate. Residue Lys179 coordinates ATP. Residue Ser180 is modified to Phosphoserine.

This sequence belongs to the adenylate kinase family. UMP-CMP kinase subfamily. As to quaternary structure, monomer. Mg(2+) is required as a cofactor.

The protein resides in the nucleus. Its subcellular location is the cytoplasm. It carries out the reaction CMP + ATP = CDP + ADP. It catalyses the reaction dCMP + ATP = dCDP + ADP. The enzyme catalyses UMP + ATP = UDP + ADP. The catalysed reaction is a 2'-deoxyribonucleoside 5'-diphosphate + ATP = a 2'-deoxyribonucleoside 5'-triphosphate + ADP. It carries out the reaction a ribonucleoside 5'-diphosphate + ATP = a ribonucleoside 5'-triphosphate + ADP. In terms of biological role, catalyzes the phosphorylation of pyrimidine nucleoside monophosphates at the expense of ATP. Plays an important role in de novo pyrimidine nucleotide biosynthesis. Has preference for UMP and CMP as phosphate acceptors. Also displays broad nucleoside diphosphate kinase activity. This chain is UMP-CMP kinase, found in Sus scrofa (Pig).